A 170-amino-acid chain; its full sequence is Translationally-controlled tumor protein homolog (170 aa).

A TCTP domain is found at 1–170 (MIIYKDLLSG…FKDGLEIEKC (170 aa)).

This sequence belongs to the TCTP family.

The protein resides in the cytoplasm. Functionally, involved in calcium binding and microtubule stabilization. In Scophthalmus maximus (Turbot), this protein is Translationally-controlled tumor protein homolog (tpt1).